A 242-amino-acid polypeptide reads, in one-letter code: Polycomb group RING finger protein 3 (242 aa).

An RING-type zinc finger spans residues 17 to 56 (CRLCNGYLIDATTVTECLHTFCRSCLVKYLEENNTCPTCR). A disordered region spans residues 120–149 (EAHRNGETKTDEHTHKEPPEEKQEEDHDYH).

In terms of assembly, component of a PRC1-like complex.

It is found in the nucleus. Functionally, component of a Polycomb group (PcG) multiprotein PRC1-like complex, a complex class required to maintain the transcriptionally repressive state of many genes, including Hox genes, throughout development. PcG PRC1 complex acts via chromatin remodeling and modification of histones; it mediates monoubiquitination of histone H2A 'Lys-119', rendering chromatin heritably changed in its expressibility. Within the PRC1-like complex, regulates RNF2 ubiquitin ligase activity. The chain is Polycomb group RING finger protein 3 (pcgf3) from Xenopus tropicalis (Western clawed frog).